The primary structure comprises 502 residues: Glutamate--tRNA ligase (502 aa).

A 'HIGH' region motif is present at residues 21–31; sequence PSPTGVPHVGM. Positions 265 to 269 match the 'KMSKS' region motif; that stretch reads KLSKR. Position 268 (K268) interacts with ATP.

The protein belongs to the class-I aminoacyl-tRNA synthetase family. Glutamate--tRNA ligase type 1 subfamily. As to quaternary structure, monomer.

The protein localises to the cytoplasm. The enzyme catalyses tRNA(Glu) + L-glutamate + ATP = L-glutamyl-tRNA(Glu) + AMP + diphosphate. Its function is as follows. Catalyzes the attachment of glutamate to tRNA(Glu) in a two-step reaction: glutamate is first activated by ATP to form Glu-AMP and then transferred to the acceptor end of tRNA(Glu). The sequence is that of Glutamate--tRNA ligase from Mycobacterium leprae (strain TN).